A 179-amino-acid chain; its full sequence is MGILFTRIWRLFNHQEHKVIIVGLDNAGKTTILYQFSMNEVVHTSPTIGSNVEEIVVNNTRFLMWDIGGQESLRSSWNTYYTNTEFVIVVVDSTDRERISVTREELYKMLAHEDLRKAGLLIFANKQDVKECMTVAEISQFLKLTSIKDHQWHIQACCALTGEGLCQGLEWMMSRLKIR.

Gly2 is lipidated: N-myristoyl glycine. GTP contacts are provided by residues 23 to 30, 66 to 70, 125 to 128, and Ala159; these read GLDNAGKT, DIGGQ, and NKQD.

This sequence belongs to the small GTPase superfamily. Arf family. In terms of tissue distribution, low amounts were found in most tissues examined with highest levels in brain, intestine and thymus.

Lacks ADP-ribosylation enhancing activity. This is ADP-ribosylation factor-like protein 5A (Arl5a) from Rattus norvegicus (Rat).